The following is a 126-amino-acid chain: Glycine cleavage system H protein (126 aa).

A Lipoyl-binding domain is found at 20-102 (IGTIGITDYA…LGDGWFFKVR (83 aa)). N6-lipoyllysine is present on Lys61.

The protein belongs to the GcvH family. In terms of assembly, the glycine cleavage system is composed of four proteins: P, T, L and H. (R)-lipoate serves as cofactor.

Its function is as follows. The glycine cleavage system catalyzes the degradation of glycine. The H protein shuttles the methylamine group of glycine from the P protein to the T protein. This Rhodospirillum rubrum (strain ATCC 11170 / ATH 1.1.1 / DSM 467 / LMG 4362 / NCIMB 8255 / S1) protein is Glycine cleavage system H protein.